The following is a 264-amino-acid chain: Thymidylate synthase (264 aa).

Residue arginine 21 coordinates dUMP. Histidine 51 is a binding site for (6R)-5,10-methylene-5,6,7,8-tetrahydrofolate. Residue 126–127 (RR) coordinates dUMP. The Nucleophile role is filled by cysteine 146. Residues 166-169 (RSAD), asparagine 177, and 207-209 (HIY) each bind dUMP. Aspartate 169 lines the (6R)-5,10-methylene-5,6,7,8-tetrahydrofolate pocket. Alanine 263 serves as a coordination point for (6R)-5,10-methylene-5,6,7,8-tetrahydrofolate.

Belongs to the thymidylate synthase family. Bacterial-type ThyA subfamily. In terms of assembly, homodimer.

It localises to the cytoplasm. The enzyme catalyses dUMP + (6R)-5,10-methylene-5,6,7,8-tetrahydrofolate = 7,8-dihydrofolate + dTMP. It functions in the pathway pyrimidine metabolism; dTTP biosynthesis. In terms of biological role, catalyzes the reductive methylation of 2'-deoxyuridine-5'-monophosphate (dUMP) to 2'-deoxythymidine-5'-monophosphate (dTMP) while utilizing 5,10-methylenetetrahydrofolate (mTHF) as the methyl donor and reductant in the reaction, yielding dihydrofolate (DHF) as a by-product. This enzymatic reaction provides an intracellular de novo source of dTMP, an essential precursor for DNA biosynthesis. The protein is Thymidylate synthase of Coxiella burnetii (strain Dugway 5J108-111).